The following is a 449-amino-acid chain: Tapasin (449 aa).

Residues 1 to 20 (MKPLSLLLAVASALGTAVSA) form the signal peptide. The Lumenal segment spans residues 21–413 (GPAVIECWMV…GLSGPSLEDS (393 aa)). The cysteines at positions 27 and 91 are disulfide-linked. Asn-253 carries an N-linked (GlcNAc...) asparagine glycan. Residues 292–399 (PKISLTPAPL…PTLGRSAEVT (108 aa)) enclose the Ig-like C1-type domain. Cys-315 and Cys-382 are joined by a disulfide. The helical transmembrane segment at 414-434 (VGLFLSAFLLLGLIKALGWVA) threads the bilayer. Residues 435 to 449 (ASRSTSKDPKEKKAQ) lie on the Cytoplasmic side of the membrane.

Heterodimer with PDIA3; disulfide-linked. Obligatory mediator for the interaction between newly assembled MHC class I molecules, calreticulin, PDIA3 and TAP. Up to 4 MHC class I/tapasin complexes bind to 1 TAP. Interacts with HLA-G-B2M complex; this interaction is required for loading of high affinity peptides. On its own or as part of MHC class I peptide loading complex, interacts with ligand-free MR1 or MR1-B2M complex, providing for stable MR1 pools ready for metabolite antigen processing.

It localises to the endoplasmic reticulum membrane. Its function is as follows. Involved in the association of MHC class I with transporter associated with antigen processing (TAP) and in the assembly of MHC class I with peptide (peptide loading). In Canis lupus familiaris (Dog), this protein is Tapasin (TAPBP).